The primary structure comprises 235 residues: uncharacterized protein (235 aa).

The interval 1–98 (MDTKLSVTGA…NKKNTLHYSK (98 aa)) is disordered. Glycyl lysine isopeptide (Lys-Gly) (interchain with G-Cter in ubiquitin) cross-links involve residues Lys-16 and Lys-35. The segment covering 38–50 (NGNKKRNKNRNRN) has biased composition (basic residues). A compositionally biased stretch (basic and acidic residues) spans 51–60 (KKTETKEQNE).

This is an uncharacterized protein from Saccharomyces cerevisiae (strain ATCC 204508 / S288c) (Baker's yeast).